The chain runs to 136 residues: Histone H3 (136 aa).

The tract at residues 1 to 43 (MARTKQTARKSTGGKAPRKQLASKAARKAAPSTGGVKKPHRYK) is disordered. Residue Lys-5 is modified to N6,N6,N6-trimethyllysine; alternate. At Lys-5 the chain carries N6,N6-dimethyllysine; alternate. 2 positions are modified to N6-methyllysine; alternate: Lys-5 and Lys-10. Lys-10 is modified (N6-acetyllysine; alternate). Ser-11 carries the phosphoserine modification. Position 15 is an N6,N6-dimethyllysine; alternate (Lys-15). Residues Lys-15, Lys-19, Lys-24, Lys-28, and Lys-37 each carry the N6-acetyllysine; alternate modification. An N6-methyllysine; alternate mark is found at Lys-19, Lys-24, Lys-28, and Lys-37. Residues Lys-28 and Lys-37 each carry the N6,N6,N6-trimethyllysine; alternate modification. Lys-28 and Lys-37 each carry N6,N6-dimethyllysine; alternate. Residues Lys-57 and Lys-65 each carry the N6-acetyllysine modification. Lys-80 bears the N6,N6,N6-trimethyllysine; alternate mark. The residue at position 80 (Lys-80) is an N6,N6-dimethyllysine; alternate. Lys-80 bears the N6-methyllysine; alternate mark.

It belongs to the histone H3 family. In terms of assembly, the nucleosome is a histone octamer containing two molecules each of H2A, H2B, H3 and H4 assembled in one H3-H4 heterotetramer and two H2A-H2B heterodimers. The octamer wraps approximately 147 bp of DNA. In terms of processing, phosphorylated to form H3S10ph. H3S10ph promotes subsequent H3K14ac formation and is required for transcriptional activation through TBP recruitment to the promoters. Post-translationally, mono-, di- and trimethylated by the COMPASS complex to form H3K4me1/2/3. H3K4me activates gene expression by regulating transcription elongation and plays a role in telomere length maintenance. H3K4me enrichment correlates with transcription levels, and occurs in a 5' to 3' gradient with H3K4me3 enrichment at the 5'-end of genes, shifting to H3K4me2 and then H3K4me1. Methylated by set2 to form H3K36me. H3K36me represses gene expression. Methylated by dot1 to form H3K79me. H3K79me is required for association of SIR proteins with telomeric regions and for telomeric silencing. The COMPASS-mediated formation of H3K4me2/3 and the dot1-mediated formation of H3K79me require H2BK123ub1. Acetylation of histone H3 leads to transcriptional activation. H3K14ac formation by gcn5 is promoted by H3S10ph. H3K14ac can also be formed by esa1. H3K56ac formation occurs predominantly in newly synthesized H3 molecules during G1, S and G2/M of the cell cycle and may be involved in DNA repair.

Its subcellular location is the nucleus. The protein resides in the chromosome. In terms of biological role, core component of nucleosome. Nucleosomes wrap and compact DNA into chromatin, limiting DNA accessibility to the cellular machineries which require DNA as a template. Histones thereby play a central role in transcription regulation, DNA repair, DNA replication and chromosomal stability. DNA accessibility is regulated via a complex set of post-translational modifications of histones, also called histone code, and nucleosome remodeling. This is Histone H3 (hht1) from Neosartorya fischeri (strain ATCC 1020 / DSM 3700 / CBS 544.65 / FGSC A1164 / JCM 1740 / NRRL 181 / WB 181) (Aspergillus fischerianus).